The primary structure comprises 638 residues: Chaperone protein DnaK (638 aa).

Thr197 is subject to Phosphothreonine; by autocatalysis. The disordered stretch occupies residues 598-638 (QQSAPSGAAAGPDEGAPSGSGGTSGTRGGDDVIDAEFTETK). The segment covering 615–624 (SGSGGTSGTR) has biased composition (gly residues). Positions 628–638 (DVIDAEFTETK) are enriched in acidic residues.

It belongs to the heat shock protein 70 family.

Acts as a chaperone. The polypeptide is Chaperone protein DnaK (Gloeobacter violaceus (strain ATCC 29082 / PCC 7421)).